The following is a 271-amino-acid chain: Large ribosomal subunit protein uL15c (271 aa).

2 disordered regions span residues 1-21 (MASLLSLSSTPPSTANSNNYP) and 66-120 (SNVS…QKSR). A chloroplast-targeting transit peptide spans 1–61 (MASLLSLSST…KESTRLVVVA (61 aa)). The segment covering 66-76 (SNVSPSIGSGS) has biased composition (low complexity). Basic residues predominate over residues 91-101 (SRKKGKRKGRG). Gly residues predominate over residues 102 to 114 (HAAGQGGSCGFGM).

As to quaternary structure, component of the chloroplast large ribosomal subunit (LSU). Mature 70S chloroplast ribosomes of higher plants consist of a small (30S) and a large (50S) subunit. The 30S small subunit contains 1 molecule of ribosomal RNA (16S rRNA) and 24 different proteins. The 50S large subunit contains 3 rRNA molecules (23S, 5S and 4.5S rRNA) and 33 different proteins.

It localises to the plastid. It is found in the chloroplast. In terms of biological role, component of the chloroplast ribosome (chloro-ribosome), a dedicated translation machinery responsible for the synthesis of chloroplast genome-encoded proteins, including proteins of the transcription and translation machinery and components of the photosynthetic apparatus. This Spinacia oleracea (Spinach) protein is Large ribosomal subunit protein uL15c (RPL15).